Reading from the N-terminus, the 123-residue chain is Large ribosomal subunit protein uL14 (123 aa).

It belongs to the universal ribosomal protein uL14 family. Part of the 50S ribosomal subunit. Forms a cluster with proteins L3 and L19. In the 70S ribosome, L14 and L19 interact and together make contacts with the 16S rRNA in bridges B5 and B8.

Its function is as follows. Binds to 23S rRNA. Forms part of two intersubunit bridges in the 70S ribosome. This chain is Large ribosomal subunit protein uL14, found in Vibrio parahaemolyticus serotype O3:K6 (strain RIMD 2210633).